Reading from the N-terminus, the 123-residue chain is Large ribosomal subunit protein bL12 (123 aa).

The protein belongs to the bacterial ribosomal protein bL12 family. Homodimer. Part of the ribosomal stalk of the 50S ribosomal subunit. Forms a multimeric L10(L12)X complex, where L10 forms an elongated spine to which 2 to 4 L12 dimers bind in a sequential fashion. Binds GTP-bound translation factors.

Its function is as follows. Forms part of the ribosomal stalk which helps the ribosome interact with GTP-bound translation factors. Is thus essential for accurate translation. The polypeptide is Large ribosomal subunit protein bL12 (Bacillus licheniformis (strain ATCC 14580 / DSM 13 / JCM 2505 / CCUG 7422 / NBRC 12200 / NCIMB 9375 / NCTC 10341 / NRRL NRS-1264 / Gibson 46)).